The sequence spans 36 residues: Photosystem I reaction center subunit VIII (36 aa).

Residues 6–26 traverse the membrane as a helical segment; that stretch reads LPSIFVPLVGLVFPAIAMASL.

Belongs to the PsaI family.

The protein localises to the plastid. It is found in the chloroplast thylakoid membrane. In terms of biological role, may help in the organization of the PsaL subunit. The polypeptide is Photosystem I reaction center subunit VIII (Drimys granadensis).